The sequence spans 441 residues: tRNA pseudouridine synthase Pus10 (441 aa).

The active-site Nucleophile is the Asp268. Residues Tyr333 and Tyr405 each coordinate substrate.

It belongs to the pseudouridine synthase Pus10 family.

It catalyses the reaction uridine(54) in tRNA = pseudouridine(54) in tRNA. It carries out the reaction uridine(55) in tRNA = pseudouridine(55) in tRNA. Its function is as follows. Responsible for synthesis of pseudouridine from uracil-54 and uracil-55 in the psi GC loop of transfer RNAs. The sequence is that of tRNA pseudouridine synthase Pus10 from Thermosphaera aggregans (strain DSM 11486 / M11TL).